The following is an 842-amino-acid chain: Glycogen phosphorylase, muscle form (842 aa).

Ser-2 is modified (N-acetylserine). Ser-15 bears the Phosphoserine; by PHK; in form phosphorylase A mark. Asp-43 and Tyr-76 together coordinate AMP. Tyr-204 and Tyr-227 each carry phosphotyrosine. 310 to 319 (RRFKSSKFGC) is a binding site for AMP. Ser-430 is modified (phosphoserine). Residue Tyr-473 is modified to Phosphotyrosine. Position 514 is a phosphoserine (Ser-514). Lys-681 carries the N6-(pyridoxal phosphate)lysine modification. Residues Ser-747 and Ser-748 each carry the phosphoserine modification.

It belongs to the glycogen phosphorylase family. In terms of assembly, homodimer. Homotetramer; to form the enzymatically active phosphorylase A. Pyridoxal 5'-phosphate is required as a cofactor. Phosphorylation of Ser-15 converts phosphorylase B (unphosphorylated) to phosphorylase A.

The catalysed reaction is [(1-&gt;4)-alpha-D-glucosyl](n) + phosphate = [(1-&gt;4)-alpha-D-glucosyl](n-1) + alpha-D-glucose 1-phosphate. With respect to regulation, allosterically regulated through the non-covalent binding of metabolites, being activated by AMP and inhibited by ATP, ADP, and glucose-6-phosphate. The activity is also controlled by post-translational modifications including phosphorylation. Functionally, allosteric enzyme that catalyzes the rate-limiting step in glycogen catabolism, the phosphorolytic cleavage of glycogen to produce glucose-1-phosphate, and plays a central role in maintaining cellular and organismal glucose homeostasis. The chain is Glycogen phosphorylase, muscle form from Macaca fascicularis (Crab-eating macaque).